The following is a 258-amino-acid chain: Spindlin-3 (258 aa).

Positions 1 to 23 are disordered; sequence MKTPFGKAAAGQRSRTGAGHGSV. 3 tudor-like domain regions span residues 50–99, 129–178, and 210–255; these read VGCR…LELH, VGKA…YQLL, and VGKQ…YDLV. 2 histone H3K4me3 and H3R8me2a binding regions span residues glutamate 138 and 246–248; that span reads DFH.

The protein belongs to the SPIN/STSY family. In terms of assembly, interacts with C11orf84/SPINDOC.

Exhibits H3K4me3-binding activity. The protein is Spindlin-3 (SPIN3) of Pongo abelii (Sumatran orangutan).